The sequence spans 393 residues: MTGPITRKDLMIVNMGPQHPSMHGVLRLIVTLDGEDVIDCEPVLGYLHRGMEKIAENRTIIQYLPYVTRWDYLATMFTEAITINAPEQLGNIQVPKRASYIRVIMLELSRIASHLLWLGPFMADIGAQTPFFYIFRERELIYDLFEAATGMRMMHNFFRIGGIAADLPYGWIDKCLDFCEYFLPAIAEYQTLITRNPIFLERVEGVGIIGGEEAINWGLSGPMLRASGIQWDLRKIDHYESYEEFDWEVQWQKEGDSLARYLTRIGEMAESIKIIQQALEGIPGGPYENLEIRRCNKVRDPEWNNFEYRFISKRPSPTFELSQQELYVRVEAPKGELGIFLIGDRSAFPWRWKIRPPGFINLQILPQLVKRMKLADIMTILGSIDIIMGEIDR.

The protein belongs to the complex I 49 kDa subunit family. In terms of assembly, NDH is composed of at least 16 different subunits, 5 of which are encoded in the nucleus.

The protein resides in the plastid. The protein localises to the chloroplast thylakoid membrane. The catalysed reaction is a plastoquinone + NADH + (n+1) H(+)(in) = a plastoquinol + NAD(+) + n H(+)(out). It catalyses the reaction a plastoquinone + NADPH + (n+1) H(+)(in) = a plastoquinol + NADP(+) + n H(+)(out). NDH shuttles electrons from NAD(P)H:plastoquinone, via FMN and iron-sulfur (Fe-S) centers, to quinones in the photosynthetic chain and possibly in a chloroplast respiratory chain. The immediate electron acceptor for the enzyme in this species is believed to be plastoquinone. Couples the redox reaction to proton translocation, and thus conserves the redox energy in a proton gradient. The chain is NAD(P)H-quinone oxidoreductase subunit H, chloroplastic from Fagopyrum esculentum subsp. ancestrale (Wild buckwheat).